Consider the following 173-residue polypeptide: Co-chaperone protein HscB homolog (173 aa).

Positions 5 to 77 (CHFALFDLQP…SQRARYLLAL (73 aa)) constitute a J domain.

Belongs to the HscB family. Interacts with HscA and stimulates its ATPase activity.

Co-chaperone involved in the maturation of iron-sulfur cluster-containing proteins. Seems to help targeting proteins to be folded toward HscA. In Ectopseudomonas mendocina (strain ymp) (Pseudomonas mendocina), this protein is Co-chaperone protein HscB homolog.